We begin with the raw amino-acid sequence, 74 residues long: Large ribosomal subunit protein bL27c (74 aa).

This sequence belongs to the bacterial ribosomal protein bL27 family.

It localises to the plastid. The protein resides in the chloroplast. The protein is Large ribosomal subunit protein bL27c (rpl27) of Calyptrosphaera sphaeroidea.